Reading from the N-terminus, the 321-residue chain is Ornithine carbamoyltransferase (321 aa).

Residues 53 to 56 (STRT), Gln80, Arg104, and 131 to 134 (HPCQ) contribute to the carbamoyl phosphate site. Residues Asn166, Asp230, and 234–235 (SM) contribute to the L-ornithine site. Carbamoyl phosphate is bound by residues 270-271 (CL) and Arg298.

Belongs to the aspartate/ornithine carbamoyltransferase superfamily. OTCase family.

It is found in the cytoplasm. The enzyme catalyses carbamoyl phosphate + L-ornithine = L-citrulline + phosphate + H(+). Its pathway is amino-acid degradation; L-arginine degradation via ADI pathway; carbamoyl phosphate from L-arginine: step 2/2. In terms of biological role, reversibly catalyzes the transfer of the carbamoyl group from carbamoyl phosphate (CP) to the N(epsilon) atom of ornithine (ORN) to produce L-citrulline. This is Ornithine carbamoyltransferase from Bifidobacterium longum subsp. infantis (strain ATCC 15697 / DSM 20088 / JCM 1222 / NCTC 11817 / S12).